The chain runs to 348 residues: Phosphoribosylformylglycinamidine cyclo-ligase (348 aa).

This sequence belongs to the AIR synthase family.

It is found in the cytoplasm. The enzyme catalyses 2-formamido-N(1)-(5-O-phospho-beta-D-ribosyl)acetamidine + ATP = 5-amino-1-(5-phospho-beta-D-ribosyl)imidazole + ADP + phosphate + H(+). Its pathway is purine metabolism; IMP biosynthesis via de novo pathway; 5-amino-1-(5-phospho-D-ribosyl)imidazole from N(2)-formyl-N(1)-(5-phospho-D-ribosyl)glycinamide: step 2/2. The protein is Phosphoribosylformylglycinamidine cyclo-ligase of Cereibacter sphaeroides (strain ATCC 17025 / ATH 2.4.3) (Rhodobacter sphaeroides).